Here is a 329-residue protein sequence, read N- to C-terminus: Malate dehydrogenase (329 aa).

An NAD(+)-binding site is contributed by 13–19 (GAAGNIS). Substrate-binding residues include Arg-94 and Arg-100. NAD(+)-binding positions include Asn-107, Gln-114, and 131-133 (VGN). The substrate site is built by Asn-133 and Arg-164. His-189 functions as the Proton acceptor in the catalytic mechanism.

Belongs to the LDH/MDH superfamily. MDH type 2 family.

The catalysed reaction is (S)-malate + NAD(+) = oxaloacetate + NADH + H(+). Its function is as follows. Catalyzes the reversible oxidation of malate to oxaloacetate. This is Malate dehydrogenase from Psychrobacter cryohalolentis (strain ATCC BAA-1226 / DSM 17306 / VKM B-2378 / K5).